Reading from the N-terminus, the 189-residue chain is Peptidyl-tRNA hydrolase (189 aa).

Residue tyrosine 15 coordinates tRNA. The active-site Proton acceptor is histidine 20. Residues phenylalanine 64 and asparagine 66 each contribute to the tRNA site.

The protein belongs to the PTH family. As to quaternary structure, monomer.

Its subcellular location is the cytoplasm. It catalyses the reaction an N-acyl-L-alpha-aminoacyl-tRNA + H2O = an N-acyl-L-amino acid + a tRNA + H(+). Its function is as follows. Hydrolyzes ribosome-free peptidyl-tRNAs (with 1 or more amino acids incorporated), which drop off the ribosome during protein synthesis, or as a result of ribosome stalling. In terms of biological role, catalyzes the release of premature peptidyl moieties from peptidyl-tRNA molecules trapped in stalled 50S ribosomal subunits, and thus maintains levels of free tRNAs and 50S ribosomes. This Persephonella marina (strain DSM 14350 / EX-H1) protein is Peptidyl-tRNA hydrolase.